Reading from the N-terminus, the 367-residue chain is uncharacterized protein (367 aa).

This is an uncharacterized protein from Buchnera aphidicola subsp. Acyrthosiphon pisum (strain APS) (Acyrthosiphon pisum symbiotic bacterium).